The following is a 257-amino-acid chain: 3-methyl-2-oxobutanoate hydroxymethyltransferase (257 aa).

Mg(2+)-binding residues include Asp-42 and Asp-86. 3-methyl-2-oxobutanoate-binding positions include Asp-42–Ser-43, Asp-86, and Lys-116. Glu-118 is a binding site for Mg(2+). Glu-185 (proton acceptor) is an active-site residue.

The protein belongs to the PanB family. Homodecamer; pentamer of dimers. It depends on Mg(2+) as a cofactor.

It localises to the cytoplasm. The enzyme catalyses 3-methyl-2-oxobutanoate + (6R)-5,10-methylene-5,6,7,8-tetrahydrofolate + H2O = 2-dehydropantoate + (6S)-5,6,7,8-tetrahydrofolate. It functions in the pathway cofactor biosynthesis; (R)-pantothenate biosynthesis; (R)-pantoate from 3-methyl-2-oxobutanoate: step 1/2. Its function is as follows. Catalyzes the reversible reaction in which hydroxymethyl group from 5,10-methylenetetrahydrofolate is transferred onto alpha-ketoisovalerate to form ketopantoate. The sequence is that of 3-methyl-2-oxobutanoate hydroxymethyltransferase from Prochlorococcus marinus (strain MIT 9215).